Here is a 146-residue protein sequence, read N- to C-terminus: Large ribosomal subunit protein uL15 (146 aa).

Residues 1–18 (MKLHELKPTPGSRHERNR) show a composition bias toward basic and acidic residues. Residues 1–69 (MKLHELKPTP…RLPKRGFNNP (69 aa)) form a disordered region. The span at 42 to 52 (SGGGVRPGFEG) shows a compositional bias: gly residues.

This sequence belongs to the universal ribosomal protein uL15 family. As to quaternary structure, part of the 50S ribosomal subunit.

In terms of biological role, binds to the 23S rRNA. This is Large ribosomal subunit protein uL15 from Exiguobacterium sp. (strain ATCC BAA-1283 / AT1b).